The sequence spans 96 residues: Venom protein 3.1 (96 aa).

The first 25 residues, 1–25 (MKFSLISVFLFAVFLSNENIFQAIA), serve as a signal peptide directing secretion. The segment at 45–84 (EAVMSSSLTNEEESRNWPHRATRNTLEKGQKRSPAARSEI) is disordered.

This sequence belongs to the non-disulfide-bridged peptide (NDBP) superfamily. As to expression, expressed by the venom gland.

The protein localises to the secreted. The polypeptide is Venom protein 3.1 (Lychas mucronatus (Chinese swimming scorpion)).